The chain runs to 273 residues: 4-hydroxy-tetrahydrodipicolinate reductase (273 aa).

Residues 11 to 16 (GATGKM) and 106 to 108 (GTT) contribute to the NAD(+) site. The active-site Proton donor/acceptor is His162. Position 163 (His163) interacts with (S)-2,3,4,5-tetrahydrodipicolinate. Lys166 (proton donor) is an active-site residue. 172–173 (GT) lines the (S)-2,3,4,5-tetrahydrodipicolinate pocket.

It belongs to the DapB family.

The protein resides in the cytoplasm. It carries out the reaction (S)-2,3,4,5-tetrahydrodipicolinate + NAD(+) + H2O = (2S,4S)-4-hydroxy-2,3,4,5-tetrahydrodipicolinate + NADH + H(+). The catalysed reaction is (S)-2,3,4,5-tetrahydrodipicolinate + NADP(+) + H2O = (2S,4S)-4-hydroxy-2,3,4,5-tetrahydrodipicolinate + NADPH + H(+). Its pathway is amino-acid biosynthesis; L-lysine biosynthesis via DAP pathway; (S)-tetrahydrodipicolinate from L-aspartate: step 4/4. Its function is as follows. Catalyzes the conversion of 4-hydroxy-tetrahydrodipicolinate (HTPA) to tetrahydrodipicolinate. The chain is 4-hydroxy-tetrahydrodipicolinate reductase from Synechococcus elongatus (strain ATCC 33912 / PCC 7942 / FACHB-805) (Anacystis nidulans R2).